Here is a 493-residue protein sequence, read N- to C-terminus: Probable malate:quinone oxidoreductase (493 aa).

This sequence belongs to the MQO family. FAD is required as a cofactor.

It catalyses the reaction (S)-malate + a quinone = a quinol + oxaloacetate. It participates in carbohydrate metabolism; tricarboxylic acid cycle; oxaloacetate from (S)-malate (quinone route): step 1/1. The polypeptide is Probable malate:quinone oxidoreductase (Mycobacterium tuberculosis (strain ATCC 25177 / H37Ra)).